The following is a 181-amino-acid chain: Adenine phosphoribosyltransferase (181 aa).

This sequence belongs to the purine/pyrimidine phosphoribosyltransferase family. As to quaternary structure, homodimer.

The protein localises to the cytoplasm. It catalyses the reaction AMP + diphosphate = 5-phospho-alpha-D-ribose 1-diphosphate + adenine. It functions in the pathway purine metabolism; AMP biosynthesis via salvage pathway; AMP from adenine: step 1/1. In terms of biological role, catalyzes a salvage reaction resulting in the formation of AMP, that is energically less costly than de novo synthesis. This chain is Adenine phosphoribosyltransferase, found in Rhodopseudomonas palustris (strain ATCC BAA-98 / CGA009).